The chain runs to 191 residues: Fe/S biogenesis protein NfuA (191 aa).

Residues C149 and C152 each coordinate [4Fe-4S] cluster.

Belongs to the NfuA family. In terms of assembly, homodimer. Requires [4Fe-4S] cluster as cofactor.

In terms of biological role, involved in iron-sulfur cluster biogenesis. Binds a 4Fe-4S cluster, can transfer this cluster to apoproteins, and thereby intervenes in the maturation of Fe/S proteins. Could also act as a scaffold/chaperone for damaged Fe/S proteins. The polypeptide is Fe/S biogenesis protein NfuA (Buchnera aphidicola subsp. Baizongia pistaciae (strain Bp)).